The primary structure comprises 176 residues: Peptide methionine sulfoxide reductase MsrA (176 aa).

The active site involves Cys-10.

The protein belongs to the MsrA Met sulfoxide reductase family.

The enzyme catalyses L-methionyl-[protein] + [thioredoxin]-disulfide + H2O = L-methionyl-(S)-S-oxide-[protein] + [thioredoxin]-dithiol. The catalysed reaction is [thioredoxin]-disulfide + L-methionine + H2O = L-methionine (S)-S-oxide + [thioredoxin]-dithiol. Its function is as follows. Has an important function as a repair enzyme for proteins that have been inactivated by oxidation. Catalyzes the reversible oxidation-reduction of methionine sulfoxide in proteins to methionine. This is Peptide methionine sulfoxide reductase MsrA from Chromobacterium violaceum (strain ATCC 12472 / DSM 30191 / JCM 1249 / CCUG 213 / NBRC 12614 / NCIMB 9131 / NCTC 9757 / MK).